We begin with the raw amino-acid sequence, 401 residues long: Tyrosine--tRNA ligase (401 aa).

Residues 42 to 51 carry the 'HIGH' region motif; it reads PTAPDLHLGH. A 'KMSKS' region motif is present at residues 226–230; the sequence is KMSKS. Residue lysine 229 participates in ATP binding. One can recognise an S4 RNA-binding domain in the interval 336–397; the sequence is IALAQLLKQI…GKRRIAKLSI (62 aa).

The protein belongs to the class-I aminoacyl-tRNA synthetase family. TyrS type 2 subfamily. Homodimer.

The protein resides in the cytoplasm. The enzyme catalyses tRNA(Tyr) + L-tyrosine + ATP = L-tyrosyl-tRNA(Tyr) + AMP + diphosphate + H(+). In terms of biological role, catalyzes the attachment of tyrosine to tRNA(Tyr) in a two-step reaction: tyrosine is first activated by ATP to form Tyr-AMP and then transferred to the acceptor end of tRNA(Tyr). The polypeptide is Tyrosine--tRNA ligase (Legionella pneumophila (strain Lens)).